The sequence spans 591 residues: Reduced folate transporter (591 aa).

An N-acetylmethionine modification is found at Met-1. Residues 1–29 (MVPSSPAVEKQVPVEPGPDPELRSWRHLV) are Cytoplasmic-facing. Ser-5 carries the post-translational modification Phosphoserine. Residues 30–50 (CYLCFYGFMAQIRPGESFITP) form a helical membrane-spanning segment. Positions 48 and 49 each coordinate folate. The Extracellular portion of the chain corresponds to 51–64 (YLLGPDKNFTREQV). Asn-58 carries an N-linked (GlcNAc...) asparagine glycan. A helical transmembrane segment spans residues 65-87 (TNEITPVLSYSYLAVLVPVFLLT). The Cytoplasmic segment spans residues 88 to 91 (DYLR). The helical transmembrane segment at 92-112 (YTPVLLLQGLSFVSVWLLLLL) threads the bilayer. The Extracellular portion of the chain corresponds to 113–116 (GHSV). Residues 117–139 (AHMQLMELFYSVTMAARIAYSSY) traverse the membrane as a helical segment. The folate site is built by Glu-123 and Arg-133. Residues Arg-133, Ile-134, Ser-137, Tyr-149, and Arg-157 each coordinate 2',3'-cGAMP. The Cytoplasmic segment spans residues 140-153 (IFSLVRPARYQRVA). The helical transmembrane segment at 154 to 178 (GYSRAAVLLGVFTSSVLGQLLVTVG) threads the bilayer. Val-164 provides a ligand contact to folate. The Extracellular portion of the chain corresponds to 179–183 (RVSFS). Residues 184–202 (TLNYISLAFLTFSVVLALF) form a helical membrane-spanning segment. Residues 203–266 (LKRPKRSLFF…ELGDSLRRPQ (64 aa)) are Cytoplasmic-facing. A Phosphoserine modification is found at Ser-225. Residues 267–292 (LRLWSLWWVFNSAGYYLVVYYVHILW) traverse the membrane as a helical segment. Folate is bound by residues Tyr-281, Tyr-282, and Tyr-286. Tyr-282 is a 2',3'-cGAMP binding site. Residues 293–304 (NEVDPTTNSARV) lie on the Extracellular side of the membrane. The chain crosses the membrane as a helical span at residues 305-327 (YNGAADAASTLLGAITSFAAGFV). Position 321 (Ser-321) interacts with 2',3'-cGAMP. The Cytoplasmic segment spans residues 328–333 (KIRWAR). A helical transmembrane segment spans residues 334-354 (WSKLLIAGVTATQAGLVFLLA). Residues 355–360 (HTRHPS) lie on the Extracellular side of the membrane. The chain crosses the membrane as a helical span at residues 361–384 (SIWLCYAAFVLFRGSYQFLVPIAT). Folate-binding residues include Arg-373 and Gln-377. Residues Gln-377, Pro-381, Thr-384, Lys-393, Cys-396, and Phe-400 each contribute to the 2',3'-cGAMP site. The Cytoplasmic portion of the chain corresponds to 385-398 (FQIASSLSKELCAL). Residues 399–422 (VFGVNTFFATIVKTIITFIVSDVR) traverse the membrane as a helical segment. Positions 407 to 419 (ATIVKTIITFIVS) are required for substrate-binding. The Extracellular segment spans residues 423–430 (GLGLPVRK). A helical transmembrane segment spans residues 431–455 (QFQLYSVYFLILSIIYFLGAMLDGL). The Cytoplasmic portion of the chain corresponds to 456–591 (RHCQRGHHPR…PSDGVQNVNQ (136 aa)). Phosphoserine is present on residues Ser-474, Ser-485, Ser-499, and Ser-503.

Belongs to the reduced folate carrier (RFC) transporter (TC 2.A.48) family. In terms of tissue distribution, placenta, liver, and to a much smaller extent, in lung.

It is found in the cell membrane. The protein resides in the apical cell membrane. The protein localises to the basolateral cell membrane. It carries out the reaction 5-amino-1-(5-phospho-beta-D-ribosyl)imidazole-4-carboxamide(in) + (6S)-5-methyl-5,6,7,8-tetrahydrofolate(out) = 5-amino-1-(5-phospho-beta-D-ribosyl)imidazole-4-carboxamide(out) + (6S)-5-methyl-5,6,7,8-tetrahydrofolate(in). The enzyme catalyses 2',3'-cGAMP(out) + 5-amino-1-(5-phospho-beta-D-ribosyl)imidazole-4-carboxamide(in) = 2',3'-cGAMP(in) + 5-amino-1-(5-phospho-beta-D-ribosyl)imidazole-4-carboxamide(out). The catalysed reaction is 3',3'-cGAMP(out) + 5-amino-1-(5-phospho-beta-D-ribosyl)imidazole-4-carboxamide(in) = 3',3'-cGAMP(in) + 5-amino-1-(5-phospho-beta-D-ribosyl)imidazole-4-carboxamide(out). Functionally, antiporter that mediates the import of reduced folates or a subset of cyclic dinucleotides, driven by the export of organic anions. Acts as an importer of immunoreactive cyclic dinucleotides, such as cyclic GMP-AMP (2'-3'-cGAMP), an immune messenger produced in response to DNA virus in the cytosol, and its linkage isomer 3'-3'-cGAMP, thus playing a role in triggering larger immune responses. Mechanistically, acts as a secondary active transporter, which exports intracellular organic anions down their concentration gradients to facilitate the uptake of its substrates. Has high affinity for N5-methyltetrahydrofolate, the predominant circulating form of folate. Also mediates the import of antifolate drug methotrexate. 5-amino-4-imidazolecarboxamide riboside (AICAR), when phosphorylated to AICAR monophosphate, can serve as an organic anion for antiporter activity. This chain is Reduced folate transporter, found in Homo sapiens (Human).